The primary structure comprises 425 residues: Proline iminopeptidase (425 aa).

Positions 52 to 315 (PWLLYLQGGP…EFPALAWAQG (264 aa)) constitute an AB hydrolase-1 domain. Catalysis depends on Ser-146, which acts as the Nucleophile. Asp-351 is an active-site residue. His-404 acts as the Proton donor in catalysis.

Belongs to the peptidase S33 family. In terms of assembly, homotetramer.

The protein resides in the cytoplasm. The enzyme catalyses Release of N-terminal proline from a peptide.. In terms of biological role, higher activity toward long peptides. Acts on hydroxyproline beta-naphthylamide with almost as high an activity as on proline beta-naphthylamide. The sequence is that of Proline iminopeptidase (pip) from Aeromonas sobria.